The following is a 25-amino-acid chain: Cytochrome c oxidase polypeptide VIIc (25 aa).

Residues 1–25 (SHYSEGPGQNLPFSVQNKXRLLGMM) form a disordered region.

It belongs to the cytochrome c oxidase VIIc family. In terms of assembly, component of the cytochrome c oxidase (complex IV, CIV), a multisubunit enzyme composed of 14 subunits. The complex is composed of a catalytic core of 3 subunits MT-CO1, MT-CO2 and MT-CO3, encoded in the mitochondrial DNA, and 11 supernumerary subunits COX4I, COX5A, COX5B, COX6A, COX6B, COX6C, COX7A, COX7B, COX7C, COX8 and NDUFA4, which are encoded in the nuclear genome. The complex exists as a monomer or a dimer and forms supercomplexes (SCs) in the inner mitochondrial membrane with NADH-ubiquinone oxidoreductase (complex I, CI) and ubiquinol-cytochrome c oxidoreductase (cytochrome b-c1 complex, complex III, CIII), resulting in different assemblies (supercomplex SCI(1)III(2)IV(1) and megacomplex MCI(2)III(2)IV(2)). Interacts with RAB5IF.

The protein localises to the mitochondrion inner membrane. The protein operates within energy metabolism; oxidative phosphorylation. In terms of biological role, component of the cytochrome c oxidase, the last enzyme in the mitochondrial electron transport chain which drives oxidative phosphorylation. The respiratory chain contains 3 multisubunit complexes succinate dehydrogenase (complex II, CII), ubiquinol-cytochrome c oxidoreductase (cytochrome b-c1 complex, complex III, CIII) and cytochrome c oxidase (complex IV, CIV), that cooperate to transfer electrons derived from NADH and succinate to molecular oxygen, creating an electrochemical gradient over the inner membrane that drives transmembrane transport and the ATP synthase. Cytochrome c oxidase is the component of the respiratory chain that catalyzes the reduction of oxygen to water. Electrons originating from reduced cytochrome c in the intermembrane space (IMS) are transferred via the dinuclear copper A center (CU(A)) of subunit 2 and heme A of subunit 1 to the active site in subunit 1, a binuclear center (BNC) formed by heme A3 and copper B (CU(B)). The BNC reduces molecular oxygen to 2 water molecules using 4 electrons from cytochrome c in the IMS and 4 protons from the mitochondrial matrix. The chain is Cytochrome c oxidase polypeptide VIIc from Oncorhynchus mykiss (Rainbow trout).